The sequence spans 963 residues: Protein translocase subunit SecA (963 aa).

ATP-binding positions include Gln-87, 105 to 109, and Asp-512; that span reads GEGKT. Disordered regions lie at residues 868–909 and 924–963; these read GPVM…EDFT and QFVGGDGSSTPQQVVAGQKVGRNDPCPCGSGKKYKKCHGS. Positions 874–886 are enriched in acidic residues; that stretch reads PDEEEDGDEDSVE. Zn(2+) contacts are provided by Cys-949, Cys-951, Cys-960, and His-961.

This sequence belongs to the SecA family. In terms of assembly, monomer and homodimer. Part of the essential Sec protein translocation apparatus which comprises SecA, SecYEG and auxiliary proteins SecDF. Other proteins may also be involved. Zn(2+) serves as cofactor.

The protein localises to the cell inner membrane. It localises to the cytoplasm. It catalyses the reaction ATP + H2O + cellular proteinSide 1 = ADP + phosphate + cellular proteinSide 2.. Part of the Sec protein translocase complex. Interacts with the SecYEG preprotein conducting channel. Has a central role in coupling the hydrolysis of ATP to the transfer of proteins into and across the cell membrane, serving as an ATP-driven molecular motor driving the stepwise translocation of polypeptide chains across the membrane. The sequence is that of Protein translocase subunit SecA from Solibacter usitatus (strain Ellin6076).